The sequence spans 113 residues: MARVTVEDCVDKISNRFDLVLMAAQRARQISGGAELTIDRDRDKNPVVALREIAEQTVTPEELHEAVVSTLQRVRVDDDDAPDEIGSLAASAEALRLTAAAPPRNQNIGGDYE.

The protein belongs to the RNA polymerase subunit omega family. The RNAP catalytic core consists of 2 alpha, 1 beta, 1 beta' and 1 omega subunit. When a sigma factor is associated with the core the holoenzyme is formed, which can initiate transcription.

The catalysed reaction is RNA(n) + a ribonucleoside 5'-triphosphate = RNA(n+1) + diphosphate. In terms of biological role, promotes RNA polymerase assembly. Latches the N- and C-terminal regions of the beta' subunit thereby facilitating its interaction with the beta and alpha subunits. The protein is DNA-directed RNA polymerase subunit omega of Rhizorhabdus wittichii (strain DSM 6014 / CCUG 31198 / JCM 15750 / NBRC 105917 / EY 4224 / RW1) (Sphingomonas wittichii).